The chain runs to 152 residues: MFRGATLVNLDSKGRLSVPTRYREQLLENAAGQMVCTIDIHHPCLLLYPLPEWEIIEQKLPRLSSMNPVERRVQRLLLGHASECQMDGAGRLLIAPVLRQHAGLTKEVMLVGQFNKFELWDETTWHQQVKEDIDAEQLATGDLSERLQDLSL.

SpoVT-AbrB domains are found at residues 5–52 (ATLV…PLPE) and 81–124 (ASEC…DETT).

The protein belongs to the MraZ family. Forms oligomers.

Its subcellular location is the cytoplasm. The protein resides in the nucleoid. Negatively regulates its own expression and that of the subsequent genes in the proximal part of the division and cell wall (dcw) gene cluster. Acts by binding directly to DNA. May also regulate the expression of genes outside the dcw cluster. In Shigella dysenteriae serotype 1 (strain Sd197), this protein is Transcriptional regulator MraZ.